The primary structure comprises 445 residues: Competence protein E (445 aa).

A signal peptide spans 1–23; it reads MKKYFLKCGYFLVCFCLPLIVFA.

The protein belongs to the bacterial secretin family. PilQ subfamily.

The protein localises to the cell outer membrane. Its function is as follows. Involved in transformation (genetic competence for DNA uptake). The sequence is that of Competence protein E (comE) from Haemophilus influenzae (strain ATCC 51907 / DSM 11121 / KW20 / Rd).